A 188-amino-acid chain; its full sequence is Peptidyl-tRNA hydrolase (188 aa).

Tyr16 is a tRNA binding site. His21 (proton acceptor) is an active-site residue. TRNA-binding residues include Phe66, Asn68, and Asn114.

This sequence belongs to the PTH family. In terms of assembly, monomer.

The protein resides in the cytoplasm. It carries out the reaction an N-acyl-L-alpha-aminoacyl-tRNA + H2O = an N-acyl-L-amino acid + a tRNA + H(+). Its function is as follows. Hydrolyzes ribosome-free peptidyl-tRNAs (with 1 or more amino acids incorporated), which drop off the ribosome during protein synthesis, or as a result of ribosome stalling. Functionally, catalyzes the release of premature peptidyl moieties from peptidyl-tRNA molecules trapped in stalled 50S ribosomal subunits, and thus maintains levels of free tRNAs and 50S ribosomes. The chain is Peptidyl-tRNA hydrolase from Geobacter sp. (strain M21).